Consider the following 95-residue polypeptide: DNA-directed RNA polymerase subunit Rpo11 (95 aa).

The protein belongs to the archaeal Rpo11/eukaryotic RPB11/RPC19 RNA polymerase subunit family. Part of the RNA polymerase complex.

The protein localises to the cytoplasm. It carries out the reaction RNA(n) + a ribonucleoside 5'-triphosphate = RNA(n+1) + diphosphate. DNA-dependent RNA polymerase (RNAP) catalyzes the transcription of DNA into RNA using the four ribonucleoside triphosphates as substrates. The polypeptide is DNA-directed RNA polymerase subunit Rpo11 (Methanococcus vannielii (strain ATCC 35089 / DSM 1224 / JCM 13029 / OCM 148 / SB)).